The primary structure comprises 696 residues: Polyribonucleotide nucleotidyltransferase (696 aa).

Positions 486 and 492 each coordinate Mg(2+). In terms of domain architecture, KH spans 553–612 (PRIIVRNIPKDRIGELIGPGGKNVRGISELTGAELYIEDDGRVTISGSNQESAEKAAKMV). The 69-residue stretch at 622-690 (GKIYEGKVKR…KTGKIDLSRK (69 aa)) folds into the S1 motif domain.

This sequence belongs to the polyribonucleotide nucleotidyltransferase family. Requires Mg(2+) as cofactor.

The protein localises to the cytoplasm. The catalysed reaction is RNA(n+1) + phosphate = RNA(n) + a ribonucleoside 5'-diphosphate. Its function is as follows. Involved in mRNA degradation. Catalyzes the phosphorolysis of single-stranded polyribonucleotides processively in the 3'- to 5'-direction. The chain is Polyribonucleotide nucleotidyltransferase from Leptospira borgpetersenii serovar Hardjo-bovis (strain L550).